The primary structure comprises 207 residues: Hepatic lectin (207 aa).

At Met1 the chain carries N-acetylmethionine. At 1-23 (MDEERLSDNVRLYKGGSIRQGLR) the chain is on the cytoplasmic side. A helical; Signal-anchor for type II membrane protein transmembrane segment spans residues 24 to 48 (SFAAVYVLLALSFLLLTLLSSVSLA). Topologically, residues 49-207 (RIAALSSKLS…YYVCEKPLPK (159 aa)) are extracellular. Residue Asn67 is glycosylated (N-linked (GlcNAc...) asparagine). The 127-residue stretch at 77 to 203 (PCGAQSRQWE…TYECYYVCEK (127 aa)) folds into the C-type lectin domain. Disulfide bonds link Cys78-Cys92, Cys109-Cys201, and Cys179-Cys193.

Post-translationally, some or all of the cysteines are involved in disulfide bonds.

It localises to the membrane. Its function is as follows. Hepatic lectin is a membrane receptor protein that recognizes and binds exposed N-acetylglucosamine moieties of plasma glycoproteins, thus mediating their clearance (from the circulation) and endocytosis. The protein is Hepatic lectin of Gallus gallus (Chicken).